A 193-amino-acid polypeptide reads, in one-letter code: Sarcoplasmic calcium-binding protein, alpha chain (193 aa).

IgE-binding epitope regions lie at residues K10–R36 and D49–N72. 3 EF-hand domains span residues M16 to I40, I57 to G92, and A101 to F136. Ca(2+) contacts are provided by D18, D20, N22, D29, D70, N72, D74, E76, E81, D114, N116, D118, K120, and E125. An igE-binding epitope region spans residues C130 to N147.

As to quaternary structure, SCPs from crayfish, lobster, and shrimp are polymorphic dimers; three isotypes (alpha-alpha, alpha-beta, and beta-beta) have been identified. In terms of tissue distribution, expressed in tail muscle (at protein level).

Like parvalbumins, SCPs seem to be more abundant in fast contracting muscles, but no functional relationship can be established from this distribution. This Penaeus vannamei (Whiteleg shrimp) protein is Sarcoplasmic calcium-binding protein, alpha chain.